A 185-amino-acid polypeptide reads, in one-letter code: Ribosome-recycling factor (185 aa).

The protein belongs to the RRF family.

The protein resides in the cytoplasm. Responsible for the release of ribosomes from messenger RNA at the termination of protein biosynthesis. May increase the efficiency of translation by recycling ribosomes from one round of translation to another. The sequence is that of Ribosome-recycling factor from Thermobifida fusca (strain YX).